A 415-amino-acid chain; its full sequence is Putative ankyrin repeat protein FPV034 (415 aa).

ANK repeat units follow at residues 12–41 (ICIKLLEQAIELKDYIVVRMILNQQENINT), 43–72 (KHFNMLRKAVLNHDHNLVNIFIDKNFNINI), 76–105 (VGYTLLRYAVEVDDVNIAKILLDAGSIINK), 107–135 (DYRLLHSAITHENKKMIELLCLHGININV), 139–168 (KGYTALYYTICNNNYDMVCFLLEKNADISI), 170–200 (NKYSMLHFLSTSNKYHNVMAVLLDKGIDVNI), 203–232 (HVKAPIHVAVERNNIYGTMLLINRNADVNI), 237–266 (GGRTSLHLAIKERNYEAAFVLINNGANVDS), 270–299 (VGNTPIFIAASLQDVRFMKLLLDNGADINV), and 303–332 (FGETPVNMVITGGSKEVTQYTVSYLISLKV).

This Fowlpox virus (strain NVSL) (FPV) protein is Putative ankyrin repeat protein FPV034 (ANK2).